Reading from the N-terminus, the 466-residue chain is Reticulophagy regulator 3 (466 aa).

The Cytoplasmic segment spans residues 1 to 80 (MEEAEGVAAA…WCLGLNAAFW (80 aa)). Ser26 carries the phosphoserine modification. A helical membrane pass occupies residues 81–101 (FFALTSLRFVFLLAFSLMIIV). The Lumenal segment spans residues 102–168 (CIDQWKNKIW…LLFKKQNPGK (67 aa)). A helical transmembrane segment spans residues 169–187 (FCLLSCGVLTFLAMLGRYI). Residues 188 to 192 (PGLLL) are Cytoplasmic-facing. A helical transmembrane segment spans residues 193–211 (SYLMLVIIMMWPLAVYHRL). Residues 212–381 (WDRAYVRLKP…ASRNEAALPE (170 aa)) lie on the Lumenal side of the membrane. The interval 244–263 (RRRALHSERATDSHSDSEEE) is disordered. Basic and acidic residues predominate over residues 248–259 (LHSERATDSHSD). At Thr254 the chain carries Phosphothreonine. Phosphoserine is present on residues Ser258 and Ser260. Thr283 is modified (phosphothreonine). 4 positions are modified to phosphoserine: Ser285, Ser288, Ser293, and Ser303. The disordered stretch occupies residues 285–335 (SEHSDAEVSCTENGTFNLSRGQTPLTEGSEDLDGHSDPEESFARDLPDFPS). Positions 294 to 310 (CTENGTFNLSRGQTPLT) are enriched in polar residues. Phosphothreonine occurs at positions 307 and 310. Phosphoserine occurs at positions 313, 320, and 360. A compositionally biased stretch (basic and acidic residues) spans 316-331 (LDGHSDPEESFARDLP). A helical membrane pass occupies residues 382–401 (LLLSSLPGGSNLTSNLASLV). At 402-466 (SQGMIQLALS…QLDPASSRSH (65 aa)) the chain is on the cytoplasmic side. The interval 412–444 (EASQTDPSGPPPRRATRGFLRAPSSDLDTDAEG) is disordered. Thr440 carries the post-translational modification Phosphothreonine. The LIR motif signature appears at 445–450 (DDFELL).

Belongs to the RETREG family. In terms of assembly, interacts with ATG8 family modifier proteins MAP1LC3A, MAP1LC3B, GABARAPL1 and GABARAPL2. Also interacts with ATG8 family modifier protein GABARAP. Interacts with CANX. Interacts with RTN4 isoform B. As to expression, widely expressed with highest levels in brain, lung, liver, muscle and spleen (protein level). Mainly expressed in the central nervous system and in parenchymatous organs including liver, lung and kidney.

The protein localises to the endoplasmic reticulum membrane. Its function is as follows. Endoplasmic reticulum (ER)-anchored autophagy regulator which exists in an inactive state under basal conditions but is activated following cellular stress. When activated, induces ER fragmentation and mediates ER delivery into lysosomes through sequestration into autophagosomes via interaction with ATG8 family proteins. Promotes ER membrane curvature and ER tubulation required for subsequent ER fragmentation and engulfment into autophagosomes. Required for collagen quality control in a LIR motif-dependent manner. Mediates NRF1-enhanced neurite outgrowth. This Mus musculus (Mouse) protein is Reticulophagy regulator 3 (Retreg3).